The primary structure comprises 248 residues: 3-deoxy-manno-octulosonate cytidylyltransferase (248 aa).

Belongs to the KdsB family.

The protein resides in the cytoplasm. The enzyme catalyses 3-deoxy-alpha-D-manno-oct-2-ulosonate + CTP = CMP-3-deoxy-beta-D-manno-octulosonate + diphosphate. The protein operates within nucleotide-sugar biosynthesis; CMP-3-deoxy-D-manno-octulosonate biosynthesis; CMP-3-deoxy-D-manno-octulosonate from 3-deoxy-D-manno-octulosonate and CTP: step 1/1. It functions in the pathway bacterial outer membrane biogenesis; lipopolysaccharide biosynthesis. In terms of biological role, activates KDO (a required 8-carbon sugar) for incorporation into bacterial lipopolysaccharide in Gram-negative bacteria. The polypeptide is 3-deoxy-manno-octulosonate cytidylyltransferase (Escherichia coli O6:H1 (strain CFT073 / ATCC 700928 / UPEC)).